A 461-amino-acid chain; its full sequence is Nuclear distribution protein PAC1 (461 aa).

The LisH domain occupies 9–41 (QAEELHKSIIAYLTANNLLNTANTLRAELNLSE). WD repeat units follow at residues 114–155 (SHRD…RTIK), 157–197 (HTRA…KNIR), 201–248 (GHDH…CVRT), 251–290 (GHTAWVRDVYPSPDGRFLLSTGDDSTARLWDISVSNPESK), 312–355 (QYLS…LMTL), 357–396 (GHDNWIRALAFHPGGKYLFSVSDDRTLRCWDLSQEGKCIK), and 401–457 (AHER…MKLR).

Belongs to the WD repeat LIS1/nudF family. As to quaternary structure, self-associates. Interacts with NDL1 and dynein.

Its subcellular location is the cytoplasm. It localises to the cytoskeleton. The protein resides in the spindle pole. In terms of biological role, positively regulates the activity of the minus-end directed microtubule motor protein dynein. May enhance dynein-mediated microtubule sliding by targeting dynein to the microtubule plus end. Required for nuclear migration during vegetative growth as well as development. Required for retrograde early endosome (EE) transport from the hyphal tip. Required for localization of dynein to the mitotic spindle poles. Recruits additional proteins to the dynein complex at SPBs. This chain is Nuclear distribution protein PAC1, found in Arthroderma otae (strain ATCC MYA-4605 / CBS 113480) (Microsporum canis).